Here is a 123-residue protein sequence, read N- to C-terminus: Fluoride-specific ion channel FluC 2 (123 aa).

Transmembrane regions (helical) follow at residues 3–23 (LDGF…RMFI), 38–58 (ILIV…LNIT), 62–82 (LILF…SFIY), and 94–114 (LILL…FCLG). Na(+) is bound by residues Gly72 and Ser75.

This sequence belongs to the fluoride channel Fluc/FEX (TC 1.A.43) family.

The protein resides in the cell inner membrane. It catalyses the reaction fluoride(in) = fluoride(out). Na(+) is not transported, but it plays an essential structural role and its presence is essential for fluoride channel function. Functionally, fluoride-specific ion channel. Important for reducing fluoride concentration in the cell, thus reducing its toxicity. This Prochlorococcus marinus subsp. pastoris (strain CCMP1986 / NIES-2087 / MED4) protein is Fluoride-specific ion channel FluC 2.